A 440-amino-acid chain; its full sequence is D-serine dehydratase (440 aa).

Residue Lys-116 is modified to N6-(pyridoxal phosphate)lysine.

It belongs to the serine/threonine dehydratase family. DsdA subfamily. Monomer. The cofactor is pyridoxal 5'-phosphate.

It catalyses the reaction D-serine = pyruvate + NH4(+). The chain is D-serine dehydratase from Salmonella arizonae (strain ATCC BAA-731 / CDC346-86 / RSK2980).